We begin with the raw amino-acid sequence, 314 residues long: Lipid A biosynthesis acyltransferase 2 (314 aa).

A helical transmembrane segment spans residues 17–37; the sequence is LSPVYWFTWFVLGMIAGISMF. Residues 137–142 carry the HXXXXD motif motif; the sequence is HGWSVD.

Belongs to the LpxL/LpxM/LpxP family. LpxM subfamily.

The protein resides in the cell inner membrane. It carries out the reaction an alpha-Kdo-(2-&gt;4)-alpha-Kdo-(2-&gt;6)-(acyl)-lipid IVA + a fatty acyl-[ACP] = an alpha-Kdo-(2-&gt;4)-alpha-Kdo-(2-&gt;6)-lipid A + holo-[ACP]. Its pathway is glycolipid biosynthesis; KDO(2)-lipid A biosynthesis; KDO(2)-lipid A from CMP-3-deoxy-D-manno-octulosonate and lipid IV(A): step 4/4. The protein operates within bacterial outer membrane biogenesis; lipopolysaccharide biosynthesis. Functionally, catalyzes the transfer of an acyl chain from an acyl-[acyl-carrier-protein] (ACP) to a Kdo(2)-(acyl)-lipid IV(A) to form a Kdo(2)-lipid A. The chain is Lipid A biosynthesis acyltransferase 2 from Shigella flexneri.